An 818-amino-acid polypeptide reads, in one-letter code: Structure-specific endonuclease subunit SLX4 (818 aa).

Disordered stretches follow at residues 1-39 (MSFLNSSRRRTRSPSPGQIFAPSATPIVIDSSPSVPSAS), 53-151 (RDPY…SSSN), 279-324 (FSEG…HQDS), 413-437 (NAQFPRKNSRPQKTRSPCSNPKTSK), and 587-712 (MLPA…MASE). Positions 28-39 (VIDSSPSVPSAS) are enriched in low complexity. A compositionally biased stretch (basic and acidic residues) spans 90–103 (PSERTKDAHGKDRF). The segment covering 306 to 316 (TTSTTITSLST) has biased composition (low complexity). Over residues 426–437 (TRSPCSNPKTSK) the composition is skewed to polar residues. Positions 604 to 618 (QMSKRDTIKSRDIRA) are enriched in basic and acidic residues. 3 stretches are compositionally biased toward polar residues: residues 621–640 (SRSNSNHIPGLVSSTSQNTG), 652–672 (SSKSNDIGTTQGSPLLTTQSV), and 696–712 (SLASNTPSSSTRTMASE).

Belongs to the SLX4 family. As to quaternary structure, forms a heterodimer with SLX1. Post-translationally, phosphorylated in response to DNA damage.

Its subcellular location is the nucleus. Functionally, regulatory subunit of the SLX1-SLX4 structure-specific endonuclease that resolves DNA secondary structures generated during DNA repair and recombination. Has endonuclease activity towards branched DNA substrates, introducing single-strand cuts in duplex DNA close to junctions with ss-DNA. The protein is Structure-specific endonuclease subunit SLX4 of Uncinocarpus reesii (strain UAMH 1704).